We begin with the raw amino-acid sequence, 1067 residues long: Chitinase-like protein C25A8.4 (1067 aa).

An N-terminal signal peptide occupies residues 1 to 18; that stretch reads MGIKTLIWLSILVVGIYC. 3 GH18 domains span residues 26–364, 372–727, and 743–1067; these read PVHY…IRNT, CTRL…QVCQ, and FVVS…HKCR. Cysteines 30 and 51 form a disulfide. Asparagine 47 and asparagine 216 each carry an N-linked (GlcNAc...) asparagine glycan. Cysteines 376 and 397 form a disulfide. Residues asparagine 475, asparagine 538, and asparagine 710 are each glycosylated (N-linked (GlcNAc...) asparagine). Residues cysteine 747 and cysteine 768 are joined by a disulfide bond. Asparagine 797 and asparagine 830 each carry an N-linked (GlcNAc...) asparagine glycan. The active-site Proton donor is the glutamate 855. N-linked (GlcNAc...) asparagine glycosylation is found at asparagine 887, asparagine 933, and asparagine 1010.

It belongs to the glycosyl hydrolase 18 family.

The protein localises to the secreted. Functionally, putative chitinase. The protein is Chitinase-like protein C25A8.4 (cht-3) of Caenorhabditis elegans.